Consider the following 412-residue polypeptide: Tyrosine--tRNA ligase 1 (412 aa).

Tyr-41 is a binding site for L-tyrosine. The short motif at 46–55 (ATADSLHVGH) is the 'HIGH' region element. Residues Tyr-174 and Gln-178 each contribute to the L-tyrosine site. A 'KMSKS' region motif is present at residues 234–238 (KMGKS). Lys-237 is a binding site for ATP. The 64-residue stretch at 348-411 (LSLTDLLLEH…KKQHLHLRLE (64 aa)) folds into the S4 RNA-binding domain.

It belongs to the class-I aminoacyl-tRNA synthetase family. TyrS type 1 subfamily. As to quaternary structure, homodimer.

The protein resides in the cytoplasm. It carries out the reaction tRNA(Tyr) + L-tyrosine + ATP = L-tyrosyl-tRNA(Tyr) + AMP + diphosphate + H(+). In terms of biological role, catalyzes the attachment of tyrosine to tRNA(Tyr) in a two-step reaction: tyrosine is first activated by ATP to form Tyr-AMP and then transferred to the acceptor end of tRNA(Tyr). The chain is Tyrosine--tRNA ligase 1 from Pseudomonas aeruginosa (strain ATCC 15692 / DSM 22644 / CIP 104116 / JCM 14847 / LMG 12228 / 1C / PRS 101 / PAO1).